We begin with the raw amino-acid sequence, 395 residues long: Flap endonuclease 1 (395 aa).

An N-domain region spans residues 1–108 (MGILGLSKLL…DELEMRRQKA (108 aa)). Aspartate 34 is a Mg(2+) binding site. Residue arginine 74 coordinates DNA. 5 residues coordinate Mg(2+): aspartate 90, glutamate 162, glutamate 164, aspartate 183, and aspartate 185. An I-domain region spans residues 126-257 (MMEKMSKRTV…QKAWEGIQRY (132 aa)). Glutamate 162 is a binding site for DNA. Residues glycine 235 and aspartate 237 each coordinate DNA. Residue aspartate 237 participates in Mg(2+) binding. Residues 340–348 (TQGRLDSFF) form an interaction with PCNA region.

Belongs to the XPG/RAD2 endonuclease family. FEN1 subfamily. Interacts with PCNA. Three molecules of FEN1 bind to one PCNA trimer with each molecule binding to one PCNA monomer. PCNA stimulates the nuclease activity without altering cleavage specificity. Mg(2+) is required as a cofactor. Post-translationally, phosphorylated. Phosphorylation upon DNA damage induces relocalization to the nuclear plasma.

The protein resides in the nucleus. It localises to the nucleolus. The protein localises to the nucleoplasm. Its subcellular location is the mitochondrion. Structure-specific nuclease with 5'-flap endonuclease and 5'-3' exonuclease activities involved in DNA replication and repair. During DNA replication, cleaves the 5'-overhanging flap structure that is generated by displacement synthesis when DNA polymerase encounters the 5'-end of a downstream Okazaki fragment. It enters the flap from the 5'-end and then tracks to cleave the flap base, leaving a nick for ligation. Also involved in the long patch base excision repair (LP-BER) pathway, by cleaving within the apurinic/apyrimidinic (AP) site-terminated flap. Acts as a genome stabilization factor that prevents flaps from equilibrating into structures that lead to duplications and deletions. Also possesses 5'-3' exonuclease activity on nicked or gapped double-stranded DNA, and exhibits RNase H activity. Also involved in replication and repair of rDNA and in repairing mitochondrial DNA. This chain is Flap endonuclease 1, found in Leishmania infantum.